The chain runs to 225 residues: UPF0173 metal-dependent hydrolase Pars_0810 (225 aa).

The protein belongs to the UPF0173 family.

The chain is UPF0173 metal-dependent hydrolase Pars_0810 from Pyrobaculum arsenaticum (strain DSM 13514 / JCM 11321 / PZ6).